We begin with the raw amino-acid sequence, 366 residues long: MATIIKNGKRWHAQVRKFGVSKSAIFLTQADAKKWAEMLEKQLESGKYNEIPDITLDELIDKYLKEVTVTKRGKREERIRLLRLSRTPLAAISLQEIGKAHFREWRNQRLKEVSPTTVLRERSSLSALMAKTIEWDFITENPLKYLEKPKAPAPRTRRYNEHEIERLIFVSGYDVEHIEPPKTLQNCTGAAFLFAIETAMRAGEIASLTWNNINFEKRTTFLPITKNGHSRTVPLSVKAIEILQHLTSVKTESDPRVFQMEARQLDHNFRKLKKMEGLENANLHFHDTRRERLAEKVDVMVLAKISGHRDLSILQNTYYAPDMAEGYKTKAGYDLTPTKGLSQRNFFFFNENFIVFTTNPPIVIKL.

The region spanning 54–133 (ITLDELIDKY…SLSALMAKTI (80 aa)) is the Core-binding (CB) domain. A Tyr recombinase domain is found at 168-331 (IFVSGYDVEH…DMAEGYKTKA (164 aa)). Residues arginine 201, lysine 226, and histidine 308 contribute to the active site. Tyrosine 318 acts as the O-(3'-phospho-DNA)-tyrosine intermediate in catalysis.

This sequence belongs to the 'phage' integrase family.

This is Putative integrase/recombinase HI_1572 from Haemophilus influenzae (strain ATCC 51907 / DSM 11121 / KW20 / Rd).